We begin with the raw amino-acid sequence, 71 residues long: ATP synthase F(0) complex subunit e, mitochondrial (71 aa).

Lysine 34 carries the post-translational modification N6-acetyllysine. Serine 68 bears the Phosphoserine mark.

It belongs to the ATPase e subunit family. As to quaternary structure, component of the ATP synthase complex composed at least of ATP5F1A/subunit alpha, ATP5F1B/subunit beta, ATP5MC1/subunit c (homooctomer), MT-ATP6/subunit a, MT-ATP8/subunit 8, ATP5ME/subunit e, ATP5MF/subunit f, ATP5MG/subunit g, ATP5MK/subunit k, ATP5MJ/subunit j, ATP5F1C/subunit gamma, ATP5F1D/subunit delta, ATP5F1E/subunit epsilon, ATP5PF/subunit F6, ATP5PB/subunit b, ATP5PD/subunit d, ATP5PO/subunit OSCP. ATP synthase complex consists of a soluble F(1) head domain (subunits alpha(3) and beta(3)) - the catalytic core - and a membrane F(0) domain - the membrane proton channel (subunits c, a, 8, e, f, g, k and j). These two domains are linked by a central stalk (subunits gamma, delta, and epsilon) rotating inside the F1 region and a stationary peripheral stalk (subunits F6, b, d, and OSCP).

Its subcellular location is the mitochondrion. It is found in the mitochondrion inner membrane. In terms of biological role, subunit e, of the mitochondrial membrane ATP synthase complex (F(1)F(0) ATP synthase or Complex V) that produces ATP from ADP in the presence of a proton gradient across the membrane which is generated by electron transport complexes of the respiratory chain. ATP synthase complex consist of a soluble F(1) head domain - the catalytic core - and a membrane F(1) domain - the membrane proton channel. These two domains are linked by a central stalk rotating inside the F(1) region and a stationary peripheral stalk. During catalysis, ATP synthesis in the catalytic domain of F(1) is coupled via a rotary mechanism of the central stalk subunits to proton translocation. In vivo, can only synthesize ATP although its ATP hydrolase activity can be activated artificially in vitro. Part of the complex F(0) domain. The polypeptide is ATP synthase F(0) complex subunit e, mitochondrial (Sus scrofa (Pig)).